The following is a 162-amino-acid chain: uncharacterized protein (162 aa).

The first 23 residues, 1-23, serve as a signal peptide directing secretion; the sequence is MLSLKSPAVLLSMVILVPLFALA.

This is an uncharacterized protein from Mycosarcoma maydis (Corn smut fungus).